We begin with the raw amino-acid sequence, 1381 residues long: DNA-directed RNA polymerase subunit beta'' (1381 aa).

The Zn(2+) site is built by cysteine 224, cysteine 295, cysteine 302, and cysteine 305.

The protein belongs to the RNA polymerase beta' chain family. RpoC2 subfamily. In terms of assembly, in plastids the minimal PEP RNA polymerase catalytic core is composed of four subunits: alpha, beta, beta', and beta''. When a (nuclear-encoded) sigma factor is associated with the core the holoenzyme is formed, which can initiate transcription. Requires Zn(2+) as cofactor.

Its subcellular location is the plastid. The protein resides in the chloroplast. It carries out the reaction RNA(n) + a ribonucleoside 5'-triphosphate = RNA(n+1) + diphosphate. Functionally, DNA-dependent RNA polymerase catalyzes the transcription of DNA into RNA using the four ribonucleoside triphosphates as substrates. The polypeptide is DNA-directed RNA polymerase subunit beta'' (Lactuca sativa (Garden lettuce)).